The sequence spans 101 residues: Pollen allergen Amb a 3 (101 aa).

The region spanning 2 to 101 is the Phytocyanin domain; that stretch reads KVYLVGGPEL…QKFVACVPGR (100 aa). N-linked (GlcNAc...) asparagine glycosylation is present at Asn-41. A disulfide bond links Cys-61 and Cys-88. Ser-84 carries an O-linked (Hex) serine glycan. Cys-97 carries the cysteine derivative modification. Blocked carboxyl end (Arg) is present on Arg-101.

The identity of the saccharide is not reported. The sugar attached to Ser-84 is represented simply as Hex. In terms of processing, cys-97 sulfhydryl group is modified but does not form an interchain disulfide bond.

The polypeptide is Pollen allergen Amb a 3 (Ambrosia artemisiifolia var. elatior (Short ragweed)).